Reading from the N-terminus, the 257-residue chain is Transcriptional regulatory protein TrcR (257 aa).

In terms of domain architecture, Response regulatory spans 33-147; the sequence is RVLLVDDEPA…ELVARLRGLL (115 aa). Asp82 carries the 4-aspartylphosphate modification. A DNA-binding region (ompR/PhoB-type) is located at residues 158–255; that stretch reads DEALRVGDLT…VRGIGYMLRP (98 aa).

In terms of processing, phosphorylated by TrcS.

Member of the two-component regulatory system TrcS/TrcR. Activates its own expression by binding specifically to the AT-rich sequence of the trcR promoter region. Also negatively regulates the expression of Rv1057 by binding to an AT-rich sequences within the Rv1057 upstream sequence. The TrcR-TrcS regulatory system may act as a transition regulatory system involved in adapting to an intracellular environment and transitioning from latency to reactivation. The protein is Transcriptional regulatory protein TrcR of Mycobacterium tuberculosis (strain ATCC 25618 / H37Rv).